The chain runs to 527 residues: MHSTNLLLEEPIRMASILEPSKPSFFPAMTKIVGTLGPKSRSVDTISSCLKAGMSVARFDFSWGDAEYHQETLENLKVAIKSTKKLCAVMLDTVGPELQVVNKSEASISLEENGTVILTPDQGQEASSQVLPINFAGLAKAVKPGDTIFVGQYLFTGSETTSVWLEVSQIKGDDVVCVIKNTATLAGSLFTLHCSQIHIDLPTLSDEDKEVIRKWGAPNKIDFLSLSYTRHVEDVRQAREFLSKLGDLSQTQIFAKIENVEGLNNFDEILQEADGIILSRGNLGIDLPPEKVFLFQKSALHKCNMAGKPAVVTRVVDSMTDNLRPTRAEATDVANAVLDGSDAILLGAETLRGLYPVETISIVGKICAEAEKVFNQDLYFKRTVKHVGEPMTHLESIASSAVRAAIKVKASVIICFTSSGRAARLIAKYRPTMPVLSVVIPRLKTNQLRWSFTGAFEARQSLIVRGLFPMLADPRHPAESTNATNESVLKVALDHGKVSGVIKSHDRVVVCQKVGDSSVVKIIELDD.

R58 is a binding site for substrate. Residues D60, S62, D92, and T93 each contribute to the K(+) site. An ATP-binding site is contributed by 60–63 (DFSW). K256 provides a ligand contact to substrate. E258 contributes to the Mg(2+) binding site. Substrate-binding residues include G281, N282, and T313. A Mg(2+)-binding site is contributed by N282.

The protein belongs to the pyruvate kinase family. Homotetramer. Mg(2+) serves as cofactor. It depends on K(+) as a cofactor.

It is found in the cytoplasm. The protein localises to the cytosol. It catalyses the reaction pyruvate + ATP = phosphoenolpyruvate + ADP + H(+). Its pathway is carbohydrate degradation; glycolysis; pyruvate from D-glyceraldehyde 3-phosphate: step 5/5. Its function is as follows. Key regulatory enzyme of the glycolytic pathway that catalyzes the final step of glycolysis, converting ADP and phosphoenolpyruvate (PEP) to ATP and pyruvate by essentially irreversible transphosphorylation. This is Pyruvate kinase 2, cytosolic from Oryza sativa subsp. indica (Rice).